A 280-amino-acid polypeptide reads, in one-letter code: Lipase chaperone (280 aa).

The helical transmembrane segment at 5–22 (ALTIITIASGSLGAVYFL) threads the bilayer.

It belongs to the lipase chaperone family.

It localises to the cell inner membrane. Its function is as follows. May be involved in the folding of the extracellular lipase during its passage through the periplasm. In Vibrio vulnificus (strain YJ016), this protein is Lipase chaperone (lifO).